Here is a 269-residue protein sequence, read N- to C-terminus: Tryptophan synthase alpha chain (269 aa).

Active-site proton acceptor residues include E49 and D60.

This sequence belongs to the TrpA family. In terms of assembly, tetramer of two alpha and two beta chains.

It catalyses the reaction (1S,2R)-1-C-(indol-3-yl)glycerol 3-phosphate + L-serine = D-glyceraldehyde 3-phosphate + L-tryptophan + H2O. It functions in the pathway amino-acid biosynthesis; L-tryptophan biosynthesis; L-tryptophan from chorismate: step 5/5. Its function is as follows. The alpha subunit is responsible for the aldol cleavage of indoleglycerol phosphate to indole and glyceraldehyde 3-phosphate. The polypeptide is Tryptophan synthase alpha chain (Histophilus somni (strain 2336) (Haemophilus somnus)).